A 234-amino-acid chain; its full sequence is MLTYETWEENNVSFSEEDETKGALSVLSWAYKEYEGEIVYACSFGVEGMVLLHLINQVNPSAKVVFLDTNVHFQETYELIQKVRERFPSLNIIEKQPKLTLDEQAKLHGNKLWESNPNLCCKIRKILPLEESLANEKAWISGLRREQSETRKHTKFINQDHRFQSIKVCPLIHWTWKEVWRYVYKHSLPYNPLHDIGYPSIGCEKCTLPVGEGGDSRDGRWAGKVKTECGLHYQ.

[4Fe-4S] cluster contacts are provided by cysteine 120, cysteine 121, cysteine 203, and cysteine 206. The active-site Nucleophile; cysteine thiosulfonate intermediate is the cysteine 229.

This sequence belongs to the PAPS reductase family. CysH subfamily. It depends on [4Fe-4S] cluster as a cofactor.

The protein resides in the cytoplasm. It catalyses the reaction [thioredoxin]-disulfide + sulfite + AMP + 2 H(+) = adenosine 5'-phosphosulfate + [thioredoxin]-dithiol. The protein operates within sulfur metabolism; hydrogen sulfide biosynthesis; sulfite from sulfate. In terms of biological role, catalyzes the formation of sulfite from adenosine 5'-phosphosulfate (APS) using thioredoxin as an electron donor. This Bacillus cereus (strain ZK / E33L) protein is Adenosine 5'-phosphosulfate reductase.